The following is a 557-amino-acid chain: Potassium-transporting ATPase potassium-binding subunit (557 aa).

10 consecutive transmembrane segments (helical) span residues 6–26 (IQLL…GLGL), 59–79 (ALSL…ILFF), 127–147 (AGLT…LLAL), 172–192 (LYVL…FGVV), 247–267 (ISNF…VFLY), 278–298 (WAIF…VWTF), 363–383 (IVFG…LLTV), 410–430 (ILGI…SVSV), 475–495 (VMIA…VLVI), and 520–540 (FYIL…FPVL).

It belongs to the KdpA family. The system is composed of three essential subunits: KdpA, KdpB and KdpC.

The protein resides in the cell inner membrane. Its function is as follows. Part of the high-affinity ATP-driven potassium transport (or Kdp) system, which catalyzes the hydrolysis of ATP coupled with the electrogenic transport of potassium into the cytoplasm. This subunit binds the periplasmic potassium ions and delivers the ions to the membrane domain of KdpB through an intramembrane tunnel. This chain is Potassium-transporting ATPase potassium-binding subunit, found in Leptospira interrogans serogroup Icterohaemorrhagiae serovar Lai (strain 56601).